Reading from the N-terminus, the 261-residue chain is Guanine nucleotide exchange factor BopE (261 aa).

The protein belongs to the GEF (guanine exchange factor) SopE family. Monomer. Interacts with human CDC42.

It localises to the secreted. Functionally, activator for both CDC42 and RAC1 by directly interacting with these Rho GTPases and acting as a guanine nucleotide exchange factor (GEF). This activation results in actin cytoskeleton rearrangements and stimulates membrane ruffling, thus promoting bacterial entry into non-phagocytic cells. The protein is Guanine nucleotide exchange factor BopE (bopE) of Burkholderia pseudomallei (strain 1710b).